Here is a 203-residue protein sequence, read N- to C-terminus: MEGAELIIQEINREAEQKIQYILSEAQKEAEKIREEARKRAQARAEWILRKAQTQAEIEKQRIIANAKLEIRKKRLEVQEALIQEVITALRERLAELPEEEYFPMLVDLTGKAVEELGSGSVVVKSNERTLKLLEGRLDEFKKALTEKLGRDVEVTLGEPITTIGGILVETPDRTVRVDNTFESRIERFEGELRAAIAKALFG.

This sequence belongs to the V-ATPase E subunit family. In terms of assembly, has multiple subunits with at least A(3), B(3), C, D, E, F, H, I and proteolipid K(x).

The protein resides in the cell membrane. Component of the A-type ATP synthase that produces ATP from ADP in the presence of a proton gradient across the membrane. The protein is A-type ATP synthase subunit E of Thermococcus onnurineus (strain NA1).